A 226-amino-acid polypeptide reads, in one-letter code: UPF0111 protein PH0637 (226 aa).

It belongs to the UPF0111 family.

The polypeptide is UPF0111 protein PH0637 (Pyrococcus horikoshii (strain ATCC 700860 / DSM 12428 / JCM 9974 / NBRC 100139 / OT-3)).